A 492-amino-acid chain; its full sequence is Ribose import ATP-binding protein RbsA (492 aa).

ABC transporter domains follow at residues 3-239 (IDMR…VGRK) and 238-492 (RKLE…TGGK). 35–42 (GENGAGKS) serves as a coordination point for ATP.

Belongs to the ABC transporter superfamily. Ribose importer (TC 3.A.1.2.1) family. In terms of assembly, the complex is composed of an ATP-binding protein (RbsA), two transmembrane proteins (RbsC) and a solute-binding protein (RbsB).

The protein localises to the cell membrane. It catalyses the reaction D-ribose(out) + ATP + H2O = D-ribose(in) + ADP + phosphate + H(+). In terms of biological role, part of the ABC transporter complex RbsABC involved in ribose import. Responsible for energy coupling to the transport system. This chain is Ribose import ATP-binding protein RbsA, found in Streptococcus agalactiae serotype Ia (strain ATCC 27591 / A909 / CDC SS700).